Here is a 490-residue protein sequence, read N- to C-terminus: Ribosomal L1 domain-containing protein 1 (490 aa).

Position 1 is an N-acetylmethionine (M1). Positions 1–27 are enriched in low complexity; that stretch reads MEDSASASLSSAAATGTSTSTPAAPTA. A disordered region spans residues 1 to 33; the sequence is MEDSASASLSSAAATGTSTSTPAAPTARKQLDK. Glycyl lysine isopeptide (Lys-Gly) (interchain with G-Cter in SUMO2) cross-links involve residues K120 and K254. Residues 280 to 293 show a composition bias toward basic residues; the sequence is LNKKKKEARRKRRE. The stretch at 280–313 forms a coiled coil; it reads LNKKKKEARRKRRERNFEKQKERKKKRQQARKTA. The tract at residues 280-490 is disordered; sequence LNKKKKEARR…PKKPKVPQST (211 aa). Residues 329–343 are compositionally biased toward basic and acidic residues; that stretch reads TVKKPESKKEQTPEH. Phosphothreonine is present on T340. Residues 344-353 show a composition bias toward basic residues; it reads GKKKRGRGKA. The residue at position 358 (T358) is a Phosphothreonine. Position 361 is a phosphoserine (S361). The residue at position 375 (T375) is a Phosphothreonine. A compositionally biased stretch (basic and acidic residues) spans 376–385; that stretch reads PANEKVEIQK. K380 participates in a covalent cross-link: Glycyl lysine isopeptide (Lys-Gly) (interchain with G-Cter in SUMO2). S392 and S396 each carry phosphoserine. T415 and T423 each carry phosphothreonine. A Phosphoserine modification is found at S427. Residues 427–460 are compositionally biased toward basic and acidic residues; sequence SPEKKPKIKEEAVKEKSPSLGKKDARQTPKKPEA. K435 participates in a covalent cross-link: Glycyl lysine isopeptide (Lys-Gly) (interchain with G-Cter in SUMO2). S443 is subject to Phosphoserine. Residue K461 forms a Glycyl lysine isopeptide (Lys-Gly) (interchain with G-Cter in SUMO2) linkage. At T465 the chain carries Phosphothreonine. N6-acetyllysine is present on K468. S469 carries the post-translational modification Phosphoserine. A compositionally biased stretch (basic residues) spans 469 to 490; sequence SVRKASHTPKKWPKKPKVPQST.

Belongs to the universal ribosomal protein uL1 family. Highly divergent. Interacts with ING1 (isoform 2). Interacts with KPNA7 and KPNA2. Expressed at high intensities in the heart, skeletal muscle, and placenta.

Its subcellular location is the nucleus. The protein localises to the nucleolus. Functionally, regulates cellular senescence through inhibition of PTEN translation. Acts as a pro-apoptotic regulator in response to DNA damage. In Homo sapiens (Human), this protein is Ribosomal L1 domain-containing protein 1 (RSL1D1).